A 153-amino-acid chain; its full sequence is Putative nuclear shuttle protein (153 aa).

Belongs to the nanoviridae nuclear shuttle protein family.

It localises to the host nucleus. The protein localises to the host cytoplasm. In terms of biological role, putative nuclear shuttle protein. In Faba bean necrotic yellows virus (isolate Syrian SV292-88) (FBNYV), this protein is Putative nuclear shuttle protein (DNA-N).